The following is a 441-amino-acid chain: Deoxyguanosinetriphosphate triphosphohydrolase-like protein (441 aa).

Residues 1–27 (MTSSVWQERRHGEDKQRRNDHRSPYQR) form a disordered region. The span at 7-27 (QERRHGEDKQRRNDHRSPYQR) shows a compositional bias: basic and acidic residues. The HD domain maps to 59 to 252 (RLTHSLEVSQ…MELADDIAYA (194 aa)).

It belongs to the dGTPase family. Type 2 subfamily.

The polypeptide is Deoxyguanosinetriphosphate triphosphohydrolase-like protein (Shewanella oneidensis (strain ATCC 700550 / JCM 31522 / CIP 106686 / LMG 19005 / NCIMB 14063 / MR-1)).